Here is a 377-residue protein sequence, read N- to C-terminus: MLRNKSQKELLHLSRQLIQPLLPNFHKGQAGKIVVIGGNEDYTGAPFFASHSAALVGADLSHVICEKAAGPVIKSYSPDLMIHPYLMDLDNPHLNLNNSELEKLKNLPIDEIIKTNDNAVLNKLIDELILPKVTSLLNRIDIVVVGPGFGRDPLMLKSLIRIIEEVKVLNLPIILDADSLYLVSLSPKIIANYPKAIITPNVVEFQRIAKALSIDADLSESNKDKLIDQTIEVSRKLGDIIVFRKGEHDLIVKSSKFLINEITGSNKRVGGQGDTLTGAIATLVNWSNNYILRLWDNQVVVNWSNNYILRLWDNQVDLDQEDANLLACFAASSVVRNASSKAFNKYGRSMQTSNVHEYLHESFTELFGDSIFRTSNI.

The 357-residue stretch at 10 to 366 (LLHLSRQLIQ…EYLHESFTEL (357 aa)) folds into the YjeF C-terminal domain. (6S)-NADPHX contacts are provided by residues glycine 148 and 201–207 (NVVEFQR). ATP contacts are provided by residues 245 to 249 (KGEHD) and 264 to 273 (GSNKRVGGQG). Residue aspartate 274 coordinates (6S)-NADPHX.

This sequence belongs to the NnrD/CARKD family. Requires Mg(2+) as cofactor.

The protein localises to the cytoplasm. The catalysed reaction is (6S)-NADHX + ATP = ADP + phosphate + NADH + H(+). It carries out the reaction (6S)-NADPHX + ATP = ADP + phosphate + NADPH + H(+). Catalyzes the dehydration of the S-form of NAD(P)HX at the expense of ATP, which is converted to ADP. Together with NAD(P)HX epimerase, which catalyzes the epimerization of the S- and R-forms, the enzyme allows the repair of both epimers of NAD(P)HX, a damaged form of NAD(P)H that is a result of enzymatic or heat-dependent hydration. The sequence is that of ATP-dependent (S)-NAD(P)H-hydrate dehydratase from Candida albicans (strain SC5314 / ATCC MYA-2876) (Yeast).